Consider the following 56-residue polypeptide: Large ribosomal subunit protein bL32 (56 aa).

The protein belongs to the bacterial ribosomal protein bL32 family.

The protein is Large ribosomal subunit protein bL32 of Prochlorococcus marinus (strain MIT 9301).